The sequence spans 418 residues: Light-independent protochlorophyllide reductase subunit N (418 aa).

Cys-17, Cys-42, and Cys-103 together coordinate [4Fe-4S] cluster.

The protein belongs to the BchN/ChlN family. As to quaternary structure, protochlorophyllide reductase is composed of three subunits; ChlL, ChlN and ChlB. Forms a heterotetramer of two ChlB and two ChlN subunits. [4Fe-4S] cluster is required as a cofactor.

The enzyme catalyses chlorophyllide a + oxidized 2[4Fe-4S]-[ferredoxin] + 2 ADP + 2 phosphate = protochlorophyllide a + reduced 2[4Fe-4S]-[ferredoxin] + 2 ATP + 2 H2O. The protein operates within porphyrin-containing compound metabolism; chlorophyll biosynthesis (light-independent). Component of the dark-operative protochlorophyllide reductase (DPOR) that uses Mg-ATP and reduced ferredoxin to reduce ring D of protochlorophyllide (Pchlide) to form chlorophyllide a (Chlide). This reaction is light-independent. The NB-protein (ChlN-ChlB) is the catalytic component of the complex. In Prochlorococcus marinus (strain MIT 9215), this protein is Light-independent protochlorophyllide reductase subunit N.